A 314-amino-acid polypeptide reads, in one-letter code: Cytochrome f (314 aa).

Residues 1–30 (MATNKFFKSLLFTLTIAISSFGFCVENSSA) form the signal peptide. Heme is bound by residues Tyr-31, Cys-51, Cys-54, and His-55. Residues 280–300 (ILGYLAFCFCLLLTQVLLVLK) traverse the membrane as a helical segment.

Belongs to the cytochrome f family. In terms of assembly, the 4 large subunits of the cytochrome b6-f complex are cytochrome b6, subunit IV (17 kDa polypeptide, petD), cytochrome f and the Rieske protein, while the 4 small subunits are PetG, PetL, PetM and PetN. The complex functions as a dimer. The cofactor is heme.

It localises to the plastid. The protein resides in the chloroplast thylakoid membrane. Functionally, component of the cytochrome b6-f complex, which mediates electron transfer between photosystem II (PSII) and photosystem I (PSI), cyclic electron flow around PSI, and state transitions. This Thalassiosira pseudonana (Marine diatom) protein is Cytochrome f.